A 139-amino-acid chain; its full sequence is ATP synthase epsilon chain (139 aa).

It belongs to the ATPase epsilon chain family. As to quaternary structure, F-type ATPases have 2 components, CF(1) - the catalytic core - and CF(0) - the membrane proton channel. CF(1) has five subunits: alpha(3), beta(3), gamma(1), delta(1), epsilon(1). CF(0) has three main subunits: a, b and c.

It localises to the cell membrane. Produces ATP from ADP in the presence of a proton gradient across the membrane. The sequence is that of ATP synthase epsilon chain from Streptococcus pneumoniae serotype 2 (strain D39 / NCTC 7466).